A 154-amino-acid polypeptide reads, in one-letter code: Endoribonuclease YbeY (154 aa).

Residues histidine 114, histidine 118, and histidine 124 each coordinate Zn(2+).

It belongs to the endoribonuclease YbeY family. Requires Zn(2+) as cofactor.

The protein localises to the cytoplasm. Single strand-specific metallo-endoribonuclease involved in late-stage 70S ribosome quality control and in maturation of the 3' terminus of the 16S rRNA. The chain is Endoribonuclease YbeY from Histophilus somni (strain 129Pt) (Haemophilus somnus).